The primary structure comprises 1013 residues: Dichlorochromopyrrolate synthase (1013 aa).

It belongs to the RebD family. In terms of assembly, homodimer. It depends on heme as a cofactor.

The enzyme catalyses 2 3-(7-chloroindol-3-yl)-2-iminopropanoate + H2O2 = dichlorochromopyrrolate + NH4(+) + 2 H2O + H(+). It catalyses the reaction 2 2-iminio-3-(indol-3-yl)propanoate + H2O2 = chromopyrrolate + NH4(+) + 2 H2O + H(+). It carries out the reaction 2 H2O2 = O2 + 2 H2O. Involved in the biosynthesis of the indolocarbazole antitumor agent rebeccamycin. Catalyzes the hydrogen peroxide-dependent dimerization of two L-tryptophan-derived molecules (imine form of indole 3-pyruvate (IPA)), to form dichlorochromopyrrolic acid (CPA), the precursor for the six-ring bisindolopyrrolocarbazole scaffold of the rebeccamycin. The hydrogen peroxide is provided together with iminoindolpropanoate by RebO. Due to the instability of indole 3-pyruvate (IPA), which is hydrolyzed in solution and exits in equilibrium with the predominant ketone form of IPA, the concerted functioning of the RebO/RebD system appears to prevent the buildup of significant amounts of IPA and its imine in solution, effectively shepherding the imine further down the biosynthetic chain. This chain is Dichlorochromopyrrolate synthase (rebD), found in Lentzea aerocolonigenes (Lechevalieria aerocolonigenes).